We begin with the raw amino-acid sequence, 691 residues long: Ribonuclease J (691 aa).

The interval 1 to 89 is disordered; sequence MTDNNHYENN…TRNYAKEELD (89 aa). Residues 1-132 form a loss of region decreases protein stability, still able to interact with RhpA, but has decreased RNase activity even on ssRNA region; it reads MTDNNHYENN…KIQVEHLNPH (132 aa). Positions 10 to 19 are enriched in low complexity; sequence NESNENSSEN. A compositionally biased stretch (basic and acidic residues) spans 41–57; it reads RENAQKNGESSHHEAPS. Residues 58–82 show a composition bias toward basic residues; it reads HHKKEHRPNKKPNNHHKQKHAKTRN. N6-acetyllysine occurs at positions 134 and 140. 6 residues coordinate Zn(2+): H208, H210, D212, H213, H277, and D299. Residues K323, K337, and K397 each carry the N6-acetyllysine modification. A substrate-binding site is contributed by 500 to 504; that stretch reads HVSGH. K511 is subject to N6-acetyllysine. H526 is a Zn(2+) binding site. 3 positions are modified to N6-acetyllysine: K547, K634, and K649.

This sequence belongs to the metallo-beta-lactamase superfamily. RNA-metabolizing metallo-beta-lactamase-like family. Bacterial RNase J subfamily. As to quaternary structure, homodimer. Homotetramer; dimer of homodimers. Interacts with RNA helicase RphA, might be a member of a minimal RNA degradosome complex. Requires Zn(2+) as cofactor. Acetylated on nine lysine residues. Some of the residues are acetylated by multiple different mechanisms. RimL is partially responsible for the acetylation of Lys-323, Lys-397 and Lys-649. HPB8_1270 homolog is partially responsible for the acetylation of Lys-323, Lys-397, Lys-511 and Lys-649. Acetyl-phosphate-mediated non-enzymatic acetylation pathway takes part in the acetylation of Lys-134, Lys-323, Lys-397, Lys-511 and Lys-649. Acetylation of the remaining residues Lys-140, Lys-337, Lys-547 and Lys-634 occurs by a yet undetermined mechanism. Acetylation on a number of these residues is important for growth regulation and proper cell morphology.

The protein resides in the cytoplasm. Catalytic activity is regulated by the balance between homodimers and homotetramers, with homotetramers being the active forms of this enzyme. Acetylation allosterically regulates the homooligomerization state and hence the catalytic activity. An RNase that has 5'-3' exoribonuclease and endoribonuclease activity. Degrades 5'-monophosphorylated ssRNA and dsRNA, considerably more active on ssRNA. Association with RhpA significantly increases the dsRNase activity. Degrades RNA substrate with hairpin structures at both ends with low activity, but presence of RhpA significantly increases the activity on this substrate. Stimulates ATPase activity of RNA helicase RhpA. Involved in stabilization of mRNA but apparently not rRNA. The protein is Ribonuclease J of Helicobacter pylori (strain B128).